We begin with the raw amino-acid sequence, 264 residues long: MKPTTIASLQKCKQDKKRFATITAYDYSFAKLFADEGLNVMLVGDSLGMTVQGHDSTLPVTVADIAYHTASVRRGAPNCLLLADLPFMAYATPEQAFENAATVMRAGANMVKIEGGEWLVETVKMLTERAVPVCGHLGLTPQSVNIFGGYKVQGRGDEAGDQLLSDALALEAAGAQLLVLECVPIELAKRITEALAIPVIGIGAGNVTDGQILVMHDAFGITGGHIPKFAKNFLAETGDIRAAVRQYMAEVESGVYPGEEHSFH.

Mg(2+)-binding residues include D45 and D84. Residues 45-46 (DS), D84, and K112 each bind 3-methyl-2-oxobutanoate. Residue E114 participates in Mg(2+) binding. E181 acts as the Proton acceptor in catalysis.

This sequence belongs to the PanB family. In terms of assembly, homodecamer; pentamer of dimers. It depends on Mg(2+) as a cofactor.

Its subcellular location is the cytoplasm. It catalyses the reaction 3-methyl-2-oxobutanoate + (6R)-5,10-methylene-5,6,7,8-tetrahydrofolate + H2O = 2-dehydropantoate + (6S)-5,6,7,8-tetrahydrofolate. It functions in the pathway cofactor biosynthesis; (R)-pantothenate biosynthesis; (R)-pantoate from 3-methyl-2-oxobutanoate: step 1/2. In terms of biological role, catalyzes the reversible reaction in which hydroxymethyl group from 5,10-methylenetetrahydrofolate is transferred onto alpha-ketoisovalerate to form ketopantoate. The chain is 3-methyl-2-oxobutanoate hydroxymethyltransferase from Shigella sonnei (strain Ss046).